The primary structure comprises 101 residues: MIPGELMPADGEIELNAGRATVSVTVANTGDRPIQVGSHFHFYETNAALAFDRETARGFRLNIAAGTAVRFEPGQTRTVELVALDGDRIVYGFNGKIMGAL.

Belongs to the urease beta subunit family. In terms of assembly, heterotrimer of UreA (gamma), UreB (beta) and UreC (alpha) subunits. Three heterotrimers associate to form the active enzyme.

The protein resides in the cytoplasm. The catalysed reaction is urea + 2 H2O + H(+) = hydrogencarbonate + 2 NH4(+). It participates in nitrogen metabolism; urea degradation; CO(2) and NH(3) from urea (urease route): step 1/1. The protein is Urease subunit beta of Cupriavidus necator (strain ATCC 17699 / DSM 428 / KCTC 22496 / NCIMB 10442 / H16 / Stanier 337) (Ralstonia eutropha).